A 732-amino-acid chain; its full sequence is Acylamino-acid-releasing enzyme (732 aa).

An N-acetylmethionine modification is found at methionine 1. Phosphoserine is present on residues serine 185 and serine 187. Catalysis depends on charge relay system residues serine 587, aspartate 675, and histidine 707.

In terms of assembly, homotetramer. In terms of tissue distribution, expressed in erythrocytes (at protein level).

It is found in the cytoplasm. It catalyses the reaction Cleavage of an N-acetyl or N-formyl amino acid from the N-terminus of a polypeptide.. Its activity is regulated as follows. Homotetramerization is required for activity. Tetramerization results in the formation of a gated channel which is involved in substrate selection and substrate access to the catalytic sites. Its function is as follows. This enzyme catalyzes the hydrolysis of the N-terminal peptide bond of an N-acetylated peptide to generate an N-acetylated amino acid and a peptide with a free N-terminus. It preferentially cleaves off Ac-Ala, Ac-Met and Ac-Ser. Also, involved in the degradation of oxidized and glycated proteins. In Homo sapiens (Human), this protein is Acylamino-acid-releasing enzyme (APEH).